The chain runs to 692 residues: Elongation factor G (692 aa).

A tr-type G domain is found at 8-282 (EKTRNIGIMA…AVLDYLPAPT (275 aa)). Residues 17-24 (AHIDAGKT), 81-85 (DTPGH), and 135-138 (NKMD) each bind GTP.

The protein belongs to the TRAFAC class translation factor GTPase superfamily. Classic translation factor GTPase family. EF-G/EF-2 subfamily.

It is found in the cytoplasm. Catalyzes the GTP-dependent ribosomal translocation step during translation elongation. During this step, the ribosome changes from the pre-translocational (PRE) to the post-translocational (POST) state as the newly formed A-site-bound peptidyl-tRNA and P-site-bound deacylated tRNA move to the P and E sites, respectively. Catalyzes the coordinated movement of the two tRNA molecules, the mRNA and conformational changes in the ribosome. The chain is Elongation factor G from Bacillus velezensis (strain DSM 23117 / BGSC 10A6 / LMG 26770 / FZB42) (Bacillus amyloliquefaciens subsp. plantarum).